Here is a 311-residue protein sequence, read N- to C-terminus: R2-like ligand binding oxidase (311 aa).

Residues glutamate 68, glutamate 101, and histidine 104 each coordinate Mn(2+). The segment at residues 71-162 (VTQDIQPFMA…AAQVRASVTY (92 aa)) is a cross-link (3-(O4'-tyrosyl)-valine (Val-Tyr)). Glutamate 101 contacts Fe cation. Residues glutamate 167, glutamate 202, and histidine 205 each coordinate Fe cation.

The protein belongs to the ribonucleoside diphosphate reductase small chain family. R2-like ligand binding oxidase subfamily. In terms of assembly, homodimer. Fe cation serves as cofactor. It depends on Mn(2+) as a cofactor.

In terms of biological role, probable oxidase that might be involved in lipid metabolism. In Mycobacterium avium (strain 104), this protein is R2-like ligand binding oxidase.